A 297-amino-acid chain; its full sequence is MAKALQGVMAALLTPFDHQQQLDSESLRRLVRFNIGQGIDGLYVGGSTGEAFVQSLAEREQVLEIVAEEAKGKITLIAHVGTVSTAESQQLASAAKRYGFDAVSAVTPFYYPFSFEEHCDHYRAIIDSADGLPMVVYNIPALSGVKLTLDQINTLVTLPGVSALKQTSGDLFQMEQIRRAHPDLVLYNGYDEIFASGLLAGADGGIGSTYNIMGWRYQGIVQALREGDVAKAQRLQTECNKVIDLLIKTGVFRGLKTVLHYMDVVSVPLCRKPFAPVDEKYLPALKALAQQLMEEKA.

The aceneuramate site is built by serine 47 and threonine 48. Catalysis depends on tyrosine 137, which acts as the Proton donor. Lysine 165 functions as the Schiff-base intermediate with substrate in the catalytic mechanism. Aceneuramate is bound by residues threonine 167, glycine 189, aspartate 191, glutamate 192, and serine 208.

The protein belongs to the DapA family. NanA subfamily. In terms of assembly, homotetramer.

The protein localises to the cytoplasm. It carries out the reaction aceneuramate = aldehydo-N-acetyl-D-mannosamine + pyruvate. The protein operates within amino-sugar metabolism; N-acetylneuraminate degradation; D-fructose 6-phosphate from N-acetylneuraminate: step 1/5. Functionally, catalyzes the reversible aldol cleavage of N-acetylneuraminic acid (sialic acid; Neu5Ac) to form pyruvate and N-acetylmannosamine (ManNAc) via a Schiff base intermediate. The sequence is that of N-acetylneuraminate lyase from Salmonella typhimurium (strain LT2 / SGSC1412 / ATCC 700720).